Here is a 1666-residue protein sequence, read N- to C-terminus: Probable clathrin heavy chain (1666 aa).

WD40-like repeat stretches follow at residues Ser24–Ser67, Ala68–Asp107, Val108–Asn148, Gly149–Glu194, Ser195–Val255, Asn256–Glu299, and Ser300–Asn328. Thr392 carries the post-translational modification Phosphothreonine. The residue at position 393 (Ser393) is a Phosphoserine. 7 CHCR repeats span residues Met534–Val680, Ala683–Leu825, Leu830–Gln969, Val975–Ala1120, Tyr1124–Ala1265, Leu1270–Thr1415, and Leu1418–Phe1561.

Belongs to the clathrin heavy chain family. In terms of assembly, clathrin triskelions, composed of 3 heavy chains and 3 light chains, are the basic subunits of the clathrin coat.

The protein localises to the cytoplasmic vesicle membrane. Its subcellular location is the membrane. The protein resides in the coated pit. Functionally, clathrin is the major protein of the polyhedral coat of coated pits and vesicles. The protein is Probable clathrin heavy chain (chc1) of Schizosaccharomyces pombe (strain 972 / ATCC 24843) (Fission yeast).